A 189-amino-acid chain; its full sequence is Phosphomevalonate kinase (189 aa).

Residues 10–16 and arginine 138 contribute to the ATP site; that span reads KRKCGKD. Asparagine 168 contacts substrate.

The protein resides in the cytoplasm. Its subcellular location is the cytosol. It catalyses the reaction (R)-5-phosphomevalonate + ATP = (R)-5-diphosphomevalonate + ADP. The protein operates within isoprenoid biosynthesis; isopentenyl diphosphate biosynthesis via mevalonate pathway; isopentenyl diphosphate from (R)-mevalonate: step 2/3. In Drosophila melanogaster (Fruit fly), this protein is Phosphomevalonate kinase.